Here is a 253-residue protein sequence, read N- to C-terminus: Proteasome subunit alpha type-7 (253 aa).

Belongs to the peptidase T1A family. As to quaternary structure, the 26S proteasome consists of a 20S proteasome core and two 19S regulatory subunits. The 20S proteasome core is composed of 28 subunits that are arranged in four stacked rings, resulting in a barrel-shaped structure. The two end rings are each formed by seven alpha subunits, and the two central rings are each formed by seven beta subunits. The catalytic chamber with the active sites is on the inside of the barrel.

It is found in the cytoplasm. The protein resides in the nucleus. The proteasome is a multicatalytic proteinase complex which is characterized by its ability to cleave peptides with Arg, Phe, Tyr, Leu, and Glu adjacent to the leaving group at neutral or slightly basic pH. The proteasome has an ATP-dependent proteolytic activity. In Caenorhabditis elegans, this protein is Proteasome subunit alpha type-7 (pas-4).